A 550-amino-acid polypeptide reads, in one-letter code: Transcription factor p65 (550 aa).

Methionine 1 carries the N-acetylmethionine modification. Positions 16-190 (ASGPYVEIIE…HPIFDNRAPN (175 aa)) constitute an RHD domain. Residue lysine 37 forms a Glycyl lysine isopeptide (Lys-Gly) (interchain with G-Cter in SUMO3) linkage. Residue cysteine 38 is modified to Cysteine persulfide; alternate. At cysteine 38 the chain carries S-nitrosocysteine; alternate. Lysine 122, lysine 123, lysine 218, and lysine 221 each carry N6-acetyllysine. Residues lysine 122 and lysine 123 each participate in a glycyl lysine isopeptide (Lys-Gly) (interchain with G-Cter in SUMO3); alternate cross-link. Residue threonine 254 is modified to Phosphothreonine. Residues serine 276 and serine 281 each carry the phosphoserine modification. The Nuclear localization signal motif lies at 301–304 (KRKR). Lysine 310 is subject to N6-acetyllysine; alternate. Residue lysine 310 is modified to N6-methyllysine. Serine 311 is modified (phosphoserine). 2 transcriptional activation domain regions span residues 342 to 388 (PKPA…APVL) and 414 to 476 (PGPP…EFQQ). At threonine 434 the chain carries Phosphothreonine. Residue serine 468 is modified to Phosphoserine. Threonine 505 is modified (phosphothreonine). The interval 520–550 (TSGLPNGLSGDEDFSSIADMDFSALLSQISS) is transcriptional activation domain 2. A Phosphoserine modification is found at serine 535. A 9aaTAD motif is present at residues 535–543 (SIADMDFSA).

Component of the NF-kappa-B p65-p50 complex. Component of the NF-kappa-B p65-c-Rel complex. Homodimer; component of the NF-kappa-B p65-p65 complex. Component of the NF-kappa-B p65-p52 complex. May interact with ETHE1. Binds TLE5 and TLE1. Interacts with TP53BP2. Binds to and is phosphorylated by the activated form of either RPS6KA4 or RPS6KA5. Interacts with ING4 and this interaction may be indirect. Interacts with CARM1, USP48 and UNC5CL. Interacts with IRAK1BP1. Interacts with NFKBID. Interacts with NFKBIA. Interacts with GSK3B. Interacts with NFKBIB. Interacts with NFKBIE. Interacts with NFKBIZ. Interacts with EHMT1 (via ANK repeats). Part of a 70-90 kDa complex at least consisting of CHUK, IKBKB, NFKBIA, RELA, ELP1 and MAP3K14. Interacts with HDAC3; HDAC3 mediates the deacetylation of RELA. Interacts with HDAC1; the interaction requires non-phosphorylated RELA. Interacts with CBP; the interaction requires phosphorylated RELA. Interacts (phosphorylated at 'Thr-254') with PIN1; the interaction inhibits p65 binding to NFKBIA. Interacts with SOCS1. Interacts with UXT. Interacts with MTDH and PHF11. Interacts with ARRB2. Interacts with NFKBIA (when phosphorylated), the interaction is direct; phosphorylated NFKBIA is part of a SCF(BTRC)-like complex lacking CUL1. Interacts with RNF25. Interacts (via C-terminus) with DDX1. Interacts with UFL1 and COMMD1. Interacts with BRMS1; this promotes deacetylation of 'Lys-310'. Interacts with NOTCH2. Directly interacts with MEN1; this interaction represses NFKB-mediated transactivation. Interacts with AKIP1, which promotes the phosphorylation and nuclear retention of RELA. Interacts (via the RHD) with GFI1; the interaction, after bacterial lipopolysaccharide (LPS) stimulation, inhibits the transcriptional activity by interfering with the DNA-binding activity to target gene promoter DNA. Interacts (when acetylated at Lys-310) with BRD4; leading to activation of the NF-kappa-B pathway. Interacts with MEFV. Interacts with CLOCK. Interacts (via N-terminus) with CPEN1; this interaction induces proteolytic cleavage of p65/RELA subunit and inhibition of NF-kappa-B transcriptional activity. Interacts with FOXP3. Interacts with CDK5RAP3; stimulates the interaction of RELA with HDAC1, HDAC2 and HDAC3 thereby inhibiting NF-kappa-B transcriptional activity. Interacts with DHX9; this interaction is direct and activates NF-kappa-B-mediated transcription. Interacts with LRRC25. Interacts with TBX21. Interacts with KAT2A. Interacts with ZBTB7A; involved in the control by RELA of the accessibility of target gene promoters. Directly interacts with DDX3X; this interaction may trap RELA in the cytoplasm, impairing nuclear relocalization upon TNF activating signals. Interacts with PHF2. Interacts with MKRN2; the interaction leads to its polyubiquitination and proteasome-dependent degradation. Interacts with ECSIT. Interacts with RAB28; the interaction contributes to RELA transport from cytoplasm to nucleus. In terms of processing, ubiquitinated by RNF182, leading to its proteasomal degradation. Degradation is required for termination of NF-kappa-B response. Polyubiquitinated via 'Lys-29'-linked ubiquitin; leading to lysosomal degradation. Monomethylated at Lys-310 by SETD6. Monomethylation at Lys-310 is recognized by the ANK repeats of EHMT1 and promotes the formation of repressed chromatin at target genes, leading to down-regulation of NF-kappa-B transcription factor activity. Phosphorylation at Ser-311 disrupts the interaction with EHMT1 without preventing monomethylation at Lys-310 and relieves the repression of target genes. Post-translationally, phosphorylation at Ser-311 disrupts the interaction with EHMT1 and promotes transcription factor activity. Phosphorylation on Ser-535 stimulates acetylation on Lys-310 and interaction with CBP; the phosphorylated and acetylated forms show enhanced transcriptional activity. Phosphorylation at Ser-276 by RPS6KA4 and RPS6KA5 promotes its transactivation and transcriptional activities. In terms of processing, phosphorylation at Ser-75 by herpes simplex virus 1/HHV-1 inhibits NF-kappa-B activation. Reversibly acetylated; the acetylation seems to be mediated by CBP, the deacetylation by HDAC3 and SIRT2. Acetylation at Lys-122 enhances DNA binding and impairs association with NFKBIA. Acetylation at Lys-310 is required for full transcriptional activity in the absence of effects on DNA binding and NFKBIA association. Acetylation at Lys-310 promotes interaction with BRD4. Acetylation can also lower DNA-binding and results in nuclear export. Interaction with BRMS1 promotes deacetylation of Lys-310. Lys-310 is deacetylated by SIRT2. Post-translationally, S-nitrosylation of Cys-38 inactivates the enzyme activity. In terms of processing, sulfhydration at Cys-38 mediates the anti-apoptotic activity by promoting the interaction with RPS3 and activating the transcription factor activity. Sumoylation by PIAS3 negatively regulates DNA-bound activated NF-kappa-B. Post-translationally, proteolytically cleaved within a conserved N-terminus region required for base-specific contact with DNA in a CPEN1-mediated manner, and hence inhibits NF-kappa-B transcriptional activity.

It is found in the nucleus. It localises to the cytoplasm. NF-kappa-B is a pleiotropic transcription factor present in almost all cell types and is the endpoint of a series of signal transduction events that are initiated by a vast array of stimuli related to many biological processes such as inflammation, immunity, differentiation, cell growth, tumorigenesis and apoptosis. NF-kappa-B is a homo- or heterodimeric complex formed by the Rel-like domain-containing proteins RELA/p65, RELB, NFKB1/p105, NFKB1/p50, REL and NFKB2/p52. The heterodimeric RELA-NFKB1 complex appears to be most abundant one. The dimers bind at kappa-B sites in the DNA of their target genes and the individual dimers have distinct preferences for different kappa-B sites that they can bind with distinguishable affinity and specificity. Different dimer combinations act as transcriptional activators or repressors, respectively. The NF-kappa-B heterodimeric RELA-NFKB1 and RELA-REL complexes, for instance, function as transcriptional activators. NF-kappa-B is controlled by various mechanisms of post-translational modification and subcellular compartmentalization as well as by interactions with other cofactors or corepressors. NF-kappa-B complexes are held in the cytoplasm in an inactive state complexed with members of the NF-kappa-B inhibitor (I-kappa-B) family. In a conventional activation pathway, I-kappa-B is phosphorylated by I-kappa-B kinases (IKKs) in response to different activators, subsequently degraded thus liberating the active NF-kappa-B complex which translocates to the nucleus. The inhibitory effect of I-kappa-B on NF-kappa-B through retention in the cytoplasm is exerted primarily through the interaction with RELA. RELA shows a weak DNA-binding site which could contribute directly to DNA binding in the NF-kappa-B complex. Besides its activity as a direct transcriptional activator, it is also able to modulate promoters accessibility to transcription factors and thereby indirectly regulate gene expression. Associates with chromatin at the NF-kappa-B promoter region via association with DDX1. Essential for cytokine gene expression in T-cells. The NF-kappa-B homodimeric RELA-RELA complex appears to be involved in invasin-mediated activation of IL-8 expression. Key transcription factor regulating the IFN response during SARS-CoV-2 infection. The chain is Transcription factor p65 from Rattus norvegicus (Rat).